The chain runs to 433 residues: Putative tartrate transporter (433 aa).

Helical transmembrane passes span 17-37 (IVPF…NIGF), 47-67 (GFSS…YFLF), 82-102 (IWIA…AFVQ), 113-133 (LLGV…SFWF), 139-159 (AAVT…GSPI), 177-197 (WMFL…LFYL), 242-262 (VIAL…LGIW), 275-295 (LQVG…MVLW), 314-334 (LLAA…TVLI), 350-370 (LWSM…IATI), and 395-415 (FAGG…VTLV).

This sequence belongs to the major facilitator superfamily. Phthalate permease family.

Its subcellular location is the cell membrane. Its function is as follows. Component of the tartrate utilization system and may allow entry of tartrate and tartrate dehydrogenase. In Agrobacterium vitis (Rhizobium vitis), this protein is Putative tartrate transporter (ttuB).